Reading from the N-terminus, the 326-residue chain is MGEETLRIAGRRSKLAVIQSESVKEIVQREFPNYTCTVLAKQTLGDQVQSKPLYAFGGKALWTKELEDLLYEEDLDQRIDMIVHSLKDMPTQLPEGFELGAITKRVDPSDCLVMAAGSPYKTLGDLPNGSVVGTSSIRRSAQLRRRYPHLVFASVRGNIQTRLKKLDDPENECKCIILATAGLVRLGLESRITQRFDSTIMLHAVGQGALGIETRTGDERLQAILAKVADRNSTICCLAERSLMRTLEGGCSVPIGVYSTFDEETSMLTLDGLVVSVDGADAAEATVSYKIKSDKEDAIACGQLLAAKLLEAGAKKILDAIHLPEA.

The residue at position 251 (Cys251) is an S-(dipyrrolylmethanemethyl)cysteine.

This sequence belongs to the HMBS family. Dipyrromethane is required as a cofactor.

It catalyses the reaction 4 porphobilinogen + H2O = hydroxymethylbilane + 4 NH4(+). It functions in the pathway porphyrin-containing compound metabolism; protoporphyrin-IX biosynthesis; coproporphyrinogen-III from 5-aminolevulinate: step 2/4. Tetrapolymerization of the monopyrrole PBG into the hydroxymethylbilane pre-uroporphyrinogen in several discrete steps. The protein is Porphobilinogen deaminase (HEM3) of Eremothecium gossypii (strain ATCC 10895 / CBS 109.51 / FGSC 9923 / NRRL Y-1056) (Yeast).